The sequence spans 274 residues: Triosephosphate isomerase (274 aa).

13-15 (NWK) lines the substrate pocket. The active-site Electrophile is H98. Residue E170 is the Proton acceptor of the active site. The substrate site is built by G176 and S216.

This sequence belongs to the triosephosphate isomerase family. As to quaternary structure, homodimer.

It localises to the cytoplasm. It catalyses the reaction D-glyceraldehyde 3-phosphate = dihydroxyacetone phosphate. Its pathway is carbohydrate biosynthesis; gluconeogenesis. It participates in carbohydrate degradation; glycolysis; D-glyceraldehyde 3-phosphate from glycerone phosphate: step 1/1. Its function is as follows. Involved in the gluconeogenesis. Catalyzes stereospecifically the conversion of dihydroxyacetone phosphate (DHAP) to D-glyceraldehyde-3-phosphate (G3P). The sequence is that of Triosephosphate isomerase from Aster yellows witches'-broom phytoplasma (strain AYWB).